We begin with the raw amino-acid sequence, 167 residues long: Putative 4-hydroxy-4-methyl-2-oxoglutarate aldolase (167 aa).

Substrate contacts are provided by residues 81 to 84 and Arg-103; that span reads GDII. Asp-104 lines the a divalent metal cation pocket.

The protein belongs to the class II aldolase/RraA-like family. As to quaternary structure, homotrimer. The cofactor is a divalent metal cation.

The enzyme catalyses 4-hydroxy-4-methyl-2-oxoglutarate = 2 pyruvate. It catalyses the reaction oxaloacetate + H(+) = pyruvate + CO2. Its function is as follows. Catalyzes the aldol cleavage of 4-hydroxy-4-methyl-2-oxoglutarate (HMG) into 2 molecules of pyruvate. Also contains a secondary oxaloacetate (OAA) decarboxylase activity due to the common pyruvate enolate transition state formed following C-C bond cleavage in the retro-aldol and decarboxylation reactions. In Corynebacterium jeikeium (strain K411), this protein is Putative 4-hydroxy-4-methyl-2-oxoglutarate aldolase.